The sequence spans 156 residues: Small ribosomal subunit protein uS7 (156 aa).

This sequence belongs to the universal ribosomal protein uS7 family. As to quaternary structure, part of the 30S ribosomal subunit. Contacts proteins S9 and S11.

In terms of biological role, one of the primary rRNA binding proteins, it binds directly to 16S rRNA where it nucleates assembly of the head domain of the 30S subunit. Is located at the subunit interface close to the decoding center, probably blocks exit of the E-site tRNA. The protein is Small ribosomal subunit protein uS7 of Glaesserella parasuis serovar 5 (strain SH0165) (Haemophilus parasuis).